A 340-amino-acid chain; its full sequence is tRNA N6-adenosine threonylcarbamoyltransferase (340 aa).

His-111 and His-115 together coordinate Fe cation. Substrate is bound by residues 133–137 (VVSGG), Asp-166, Gly-179, Asp-183, and Asn-272. Position 300 (Asp-300) interacts with Fe cation.

The protein belongs to the KAE1 / TsaD family. Fe(2+) serves as cofactor.

It localises to the cytoplasm. The enzyme catalyses L-threonylcarbamoyladenylate + adenosine(37) in tRNA = N(6)-L-threonylcarbamoyladenosine(37) in tRNA + AMP + H(+). Its function is as follows. Required for the formation of a threonylcarbamoyl group on adenosine at position 37 (t(6)A37) in tRNAs that read codons beginning with adenine. Is involved in the transfer of the threonylcarbamoyl moiety of threonylcarbamoyl-AMP (TC-AMP) to the N6 group of A37, together with TsaE and TsaB. TsaD likely plays a direct catalytic role in this reaction. The protein is tRNA N6-adenosine threonylcarbamoyltransferase of Geobacter sulfurreducens (strain ATCC 51573 / DSM 12127 / PCA).